Consider the following 305-residue polypeptide: NAD-dependent protein deacylase sirtuin-5, mitochondrial (305 aa).

The N-terminal 32 residues, 1-32, are a transit peptide targeting the mitochondrion; the sequence is MIVRQLWCSRGSTSHLCAAVRLNWRSPKMTRP. One can recognise a Deacetylase sirtuin-type domain in the interval 33-303; it reads SSDLTAFREH…PPALERHESE (271 aa). 54–73 is a binding site for NAD(+); the sequence is GAGVSAESGVPTFRGPGGFW. Substrate-binding residues include Tyr-98 and Arg-101. 136 to 139 is a binding site for NAD(+); it reads QNID. His-154 (proton acceptor) is an active-site residue. Zn(2+) is bound by residues Cys-162, Cys-165, Cys-203, and Cys-208. NAD(+) contacts are provided by residues 245 to 247, 271 to 273, and Cys-289; these read GTS and NME.

It belongs to the sirtuin family. Class III subfamily. The cofactor is Zn(2+).

It localises to the mitochondrion. The protein resides in the cytoplasm. The protein localises to the cytosol. Its subcellular location is the nucleus. The enzyme catalyses N(6)-malonyl-L-lysyl-[protein] + NAD(+) + H2O = 2''-O-malonyl-ADP-D-ribose + nicotinamide + L-lysyl-[protein]. It carries out the reaction N(6)-succinyl-L-lysyl-[protein] + NAD(+) + H2O = 2''-O-succinyl-ADP-D-ribose + nicotinamide + L-lysyl-[protein]. It catalyses the reaction N(6)-glutaryl-L-lysyl-[protein] + NAD(+) + H2O = 2''-O-glutaryl-ADP-D-ribose + nicotinamide + L-lysyl-[protein]. Functionally, NAD-dependent lysine demalonylase, desuccinylase and deglutarylase that specifically removes malonyl, succinyl and glutaryl groups on target proteins. Has weak NAD-dependent protein deacetylase activity; however this activity may not be physiologically relevant in vivo. In Danio rerio (Zebrafish), this protein is NAD-dependent protein deacylase sirtuin-5, mitochondrial (sirt5).